Consider the following 211-residue polypeptide: Uracil phosphoribosyltransferase (211 aa).

5-phospho-alpha-D-ribose 1-diphosphate contacts are provided by residues Arg-78, Arg-103, and 130-138 (DPMLATGGT). Residues Ile-195 and 200–202 (GDA) each bind uracil. Asp-201 is a 5-phospho-alpha-D-ribose 1-diphosphate binding site.

It belongs to the UPRTase family. Requires Mg(2+) as cofactor.

The catalysed reaction is UMP + diphosphate = 5-phospho-alpha-D-ribose 1-diphosphate + uracil. Its pathway is pyrimidine metabolism; UMP biosynthesis via salvage pathway; UMP from uracil: step 1/1. With respect to regulation, allosterically activated by GTP. Functionally, catalyzes the conversion of uracil and 5-phospho-alpha-D-ribose 1-diphosphate (PRPP) to UMP and diphosphate. The sequence is that of Uracil phosphoribosyltransferase from Streptomyces griseus subsp. griseus (strain JCM 4626 / CBS 651.72 / NBRC 13350 / KCC S-0626 / ISP 5235).